Reading from the N-terminus, the 478-residue chain is MLILRQFQISSFELFQSPKQTGFYSSSRSVPLPRTRFYSDFRVMSGNKGTNYEKLYLGMDFGTSGGRFTVIDEQGEIKAQGKREYPPFMKEESMGWASSWKATLFSLLEDIPVTVRSLVSSISLDGTSATTLILNSESGEVLCQPYLYNQSCPDALPEVKSIAPANHTVCSGTSTLCKLVSWWNTEVPNRESAVLLHQADWLLWLLHGRLGVSDYNNALKVGYDPESESYPSWLLGQPYSQLLPKVQAPGTSIGNLKESFTRQFGFPDDCIVCTGTTDSIAAFLAARATEPGKAVTSLGSTLAIKLLSTKRVDDARYGVYSHRLDDKWLVGGASNTGGAILRQLFSDEQLERLSQEINPMVGSPLDYYPLQSSGERFPIADPNLAPRLLPRPESDVEFLHGILESIARIEGKGYKLLKELGATEAEEVLTAGGGAKNDKWIKIRQRVLGLPVKKAVHTEASYGASLLALKGAKQNSGL.

Residues 1–38 constitute a chloroplast transit peptide; the sequence is MLILRQFQISSFELFQSPKQTGFYSSSRSVPLPRTRFY. Substrate is bound by residues Asp-60, 64–67, and Asp-278; that span reads SGGR. Residues Ser-300, Gly-338, and 433–437 contribute to the ATP site; that span reads GGAKN.

Belongs to the FGGY kinase family. It depends on a divalent metal cation as a cofactor.

The protein resides in the plastid. The protein localises to the chloroplast. The catalysed reaction is D-ribulose + ATP = D-ribulose 5-phosphate + ADP + H(+). Exhibits ATP hydrolysis without substrate. Can phosphorylate D-ribulose with low efficiency. The protein is D-ribulose kinase of Arabidopsis thaliana (Mouse-ear cress).